The chain runs to 155 residues: Small ribosomal subunit protein uS7c (155 aa).

Belongs to the universal ribosomal protein uS7 family. Part of the 30S ribosomal subunit.

Its subcellular location is the plastid. The protein localises to the chloroplast. In terms of biological role, one of the primary rRNA binding proteins, it binds directly to 16S rRNA where it nucleates assembly of the head domain of the 30S subunit. In Gunnera chilensis (Chilean rhubarb), this protein is Small ribosomal subunit protein uS7c (rps7).